A 1418-amino-acid chain; its full sequence is Sterol 3-beta-glucosyltransferase (1418 aa).

Basic and acidic residues predominate over residues 1–16 (MRPFLDDAKRRVDRKL). Disordered regions lie at residues 1–59 (MRPF…SREG), 83–188 (ARFD…RSAT), and 207–233 (LKAS…ASVS). The span at 18-28 (ASRQSLSTSRL) shows a compositional bias: polar residues. Composition is skewed to basic and acidic residues over residues 35–44 (DRLKDNHDAQ) and 95–105 (SEQRPRKESSV). Positions 106-115 (RKGTSASANT) are enriched in polar residues. Positions 116–126 (SSPLDSSQRSS) are enriched in low complexity. 2 stretches are compositionally biased toward basic and acidic residues: residues 127 to 139 (SRTD…ESGT) and 147 to 166 (TISD…HEPQ). Over residues 209 to 219 (ASSTERSQPSL) the composition is skewed to polar residues. The GRAM 1 domain maps to 249–288 (EKVLVEYACSLLQSILLQGYMYVTEGHICFYAYLPKKSTV). The 99-residue stretch at 289–387 (AIKSGYLYKR…WVKALQKVIF (99 aa)) folds into the PH domain. The tract at residues 462–651 (ISSQHLSPQP…DPTKSFSGAP (190 aa)) is disordered. Residues 486-497 (RWSLTSGTSRVL) are compositionally biased toward polar residues. The span at 508-519 (ASASTSHTSLAH) shows a compositional bias: low complexity. Residues 534–575 (SESILNSFEQGTESSAAWQSMTDAAESASQILNRSDVFQSPT) show a composition bias toward polar residues. Positions 578 to 598 (GLDRRPSGGERRGRRNSDETA) are enriched in basic and acidic residues. Over residues 599 to 612 (RSLSTRANVGTGQQ) the composition is skewed to polar residues. Residues 615 to 633 (ELGRRMDGDTSGREARDST) are compositionally biased toward basic and acidic residues. Residues 635-651 (ESDQYTQDPTKSFSGAP) are compositionally biased toward polar residues. The 67-residue stretch at 733-799 (DRFRAHFALP…RDIENVEKEK (67 aa)) folds into the GRAM 2 domain. Residues S920, R921, D923, A1223, H1225, H1238, G1242, T1243, D1262, and Q1263 each contribute to the UDP-alpha-D-glucose site. The tract at residues 1339 to 1418 (SIASSTPFSP…SGPGRKLSGR (80 aa)) is disordered. A compositionally biased stretch (low complexity) spans 1341 to 1355 (ASSTPFSPTPSAKTT). Positions 1358 to 1379 (QDADDDVEDSEEWTFVGDDTDM) are enriched in acidic residues. The span at 1380–1391 (EMSRRLRDRAIS) shows a compositional bias: basic and acidic residues.

This sequence belongs to the glycosyltransferase 28 family.

It localises to the cytoplasm. The protein resides in the preautophagosomal structure membrane. The enzyme catalyses a sterol + UDP-alpha-D-glucose = a sterol 3-beta-D-glucoside + UDP + H(+). It carries out the reaction ergosterol + UDP-alpha-D-glucose = ergosteryl 3-beta-D-glucoside + UDP + H(+). Functionally, sterol glycosyltransferase responsible for the glycosylation of ergosterol to form ergosterol-glucoside. The polypeptide is Sterol 3-beta-glucosyltransferase (Neosartorya fischeri (strain ATCC 1020 / DSM 3700 / CBS 544.65 / FGSC A1164 / JCM 1740 / NRRL 181 / WB 181) (Aspergillus fischerianus)).